A 489-amino-acid chain; its full sequence is WRKY transcription factor 72B (489 aa).

3 disordered regions span residues 1–100 (MENK…EMRE), 131–159 (QKET…QEAD), and 234–267 (DENE…RARV). Basic and acidic residues-rich tracts occupy residues 32–52 (GRKE…KDYM) and 83–100 (THKE…EMRE). The stretch at 84–132 (HKEQDDQLASAKDEMREVMEENQRLRMHLDRMMKEYRNLQNQFHDIVQK) forms a coiled coil. Residues 138–147 (SSSTTVNTST) show a composition bias toward low complexity. Residues 273 to 339 (CDAPTMNDGC…YEGTHNHTLP (67 aa)) constitute a DNA-binding region (WRKY). 2 disordered regions span residues 356–381 (LLSG…PTTT) and 427–454 (TSTS…YNYN). Low complexity-rich tracts occupy residues 371-381 (TATTTTTPTTT) and 427-438 (TSTSSSSPSSLS).

It belongs to the WRKY group II-b family.

The protein localises to the nucleus. In terms of biological role, in association with WRKY72A, contributes to basal defense against root-knot nematodes (RKNs) and potato aphids, as well as Mi-1-mediated gene-for-gene resistance to these pests. Both WRKY72A and WRKY72B are not required for gene-for-gene resistance mediated by Pto, another tomato R gene. The chain is WRKY transcription factor 72B from Solanum lycopersicum (Tomato).